The chain runs to 173 residues: Phosphopantetheine adenylyltransferase (173 aa).

Threonine 9 is a binding site for substrate. Residues 9 to 10 (TF) and histidine 17 contribute to the ATP site. Substrate is bound by residues lysine 41, threonine 75, and arginine 89. Residues 90–92 (GLR), glutamate 100, and 125–131 (HIYLSSS) contribute to the ATP site.

It belongs to the bacterial CoaD family. In terms of assembly, homohexamer. Mg(2+) serves as cofactor.

It is found in the cytoplasm. It carries out the reaction (R)-4'-phosphopantetheine + ATP + H(+) = 3'-dephospho-CoA + diphosphate. Its pathway is cofactor biosynthesis; coenzyme A biosynthesis; CoA from (R)-pantothenate: step 4/5. Functionally, reversibly transfers an adenylyl group from ATP to 4'-phosphopantetheine, yielding dephospho-CoA (dPCoA) and pyrophosphate. This is Phosphopantetheine adenylyltransferase from Methylacidiphilum infernorum (isolate V4) (Methylokorus infernorum (strain V4)).